The sequence spans 258 residues: Hydroxyacylglutathione hydrolase (258 aa).

Zn(2+) is bound by residues His55, His57, Asp59, His60, His115, Asp132, and His170.

Belongs to the metallo-beta-lactamase superfamily. Glyoxalase II family. As to quaternary structure, monomer. Zn(2+) is required as a cofactor.

The enzyme catalyses an S-(2-hydroxyacyl)glutathione + H2O = a 2-hydroxy carboxylate + glutathione + H(+). Its pathway is secondary metabolite metabolism; methylglyoxal degradation; (R)-lactate from methylglyoxal: step 2/2. Thiolesterase that catalyzes the hydrolysis of S-D-lactoyl-glutathione to form glutathione and D-lactic acid. The protein is Hydroxyacylglutathione hydrolase of Shewanella halifaxensis (strain HAW-EB4).